Consider the following 66-residue polypeptide: U1-theraphotoxin-Cg1a 1 (66 aa).

Residues 1–21 (MKTSALFVIFGLVLLFCNSFA) form the signal peptide. Positions 22–29 (AELKTTGR) are excised as a propeptide. 3 disulfides stabilise this stretch: Cys-31–Cys-46, Cys-38–Cys-51, and Cys-45–Cys-58. Pro-63 carries the post-translational modification Proline amide.

This sequence belongs to the neurotoxin 10 (Hwtx-1) family. 46 (Jztx-7/10/12) subfamily. Expressed by the venom gland.

Its subcellular location is the secreted. Functionally, probable ion channel inhibitor. This Chilobrachys guangxiensis (Chinese earth tiger tarantula) protein is U1-theraphotoxin-Cg1a 1.